Here is an 842-residue protein sequence, read N- to C-terminus: Follistatin-related protein 4 (842 aa).

Positions 1–22 (MKPGGFWLHLTLLGASLPAALG) are cleaved as a signal peptide. The region spanning 81 to 135 (KTGEPECQCLEACRPSYVPVCGSDGRFYENHCKLHRAACLLGKRITVIHSKDCFL) is the Kazal-like domain. 3 disulfide bridges follow: cysteine 87/cysteine 119, cysteine 93/cysteine 112, and cysteine 101/cysteine 133. In terms of domain architecture, EF-hand spans 174–209 (QKRLLVESLFRDLDADGNGHLSSSELAQHVLKKQDL). 5 residues coordinate Ca(2+): aspartate 187, aspartate 189, asparagine 191, histidine 193, and glutamate 198. 2 Ig-like domains span residues 251-338 (PEDR…LQVN) and 341-426 (PVIR…EDIS). Cystine bridges form between cysteine 270–cysteine 321 and cysteine 362–cysteine 413. The N-linked (GlcNAc...) asparagine glycan is linked to asparagine 318.

It is found in the secreted. The sequence is that of Follistatin-related protein 4 (FSTL4) from Homo sapiens (Human).